Reading from the N-terminus, the 562-residue chain is MKALLRALIGQGIEALRANGTLPADTLPPDFVVERPKTREHGDFATNAAMLLAKAARSNPRALAQALLAALPASDDVAKVEIAGPGFINFHLAPTAYQREVAHVIKQGHDYGRGLAGNGRSVGVEYVSANPTGPLHVGHGRAAAIGDSLARVLDANGWNVKREFYYNDAGVQIENLALSVQARAQGLTPDSDGWPENGYRGDYIADVANAYLAGDTVDLEGHLVTGTKDPADLESIRRFAVAYLRNEQNHDLAAFRVDFDIYFLESSLYKDGKVEEAVQKLIASGHTYEEGGALWLKSTDFGDDKDRVMRKSDGTYTYFVPDVAYHLTKWQRGYERAITELGADHHGSLTRVRAGLQAMELGIPQGWPEYVLHQMVTVMRGGEEVKLSKRAGSYVTLRDLIEETSADAVRWFLIARKPDSQLTFDIDLARAQSNDNPVFYVQYAHARVCSVLRQAQEKGYKYDQAHGLAELACLDDEHSLAVMLELSRYPEVVEIAGQALEPYQIAQYLRELAHAFHTWYHNSKVLVDAAAERDAKLTLAVATQQVLANGLELLGVSAPEKM.

Positions 129 to 139 (ANPTGPLHVGH) match the 'HIGH' region motif.

This sequence belongs to the class-I aminoacyl-tRNA synthetase family. In terms of assembly, monomer.

The protein resides in the cytoplasm. It catalyses the reaction tRNA(Arg) + L-arginine + ATP = L-arginyl-tRNA(Arg) + AMP + diphosphate. In Xanthomonas axonopodis pv. citri (strain 306), this protein is Arginine--tRNA ligase.